The sequence spans 92 residues: Alpha-conotoxin FrXXA 2 (92 aa).

Residues 1–24 form the signal peptide; the sequence is MPKLEMMLLVLLILPLPYFDAAGG. Positions 25 to 45 are excised as a propeptide; that stretch reads QAVQGDGHGDGMDRYLQRDDR. Intrachain disulfides connect C63–C72, C68–C80, C73–C90, and C78–C92.

It belongs to the conotoxin D superfamily. In terms of assembly, homodimer; disulfide-linked. The homodimer contains 10 disulfide bonds. In terms of tissue distribution, expressed by the venom duct.

The protein resides in the secreted. Its function is as follows. Alpha-conotoxins act on postsynaptic membranes, they bind to the nicotinic acetylcholine receptors (nAChR) and thus inhibit them. Through its two C-terminal domains, this homodimeric protein would bind to two nAChR allosteric sites, located outside the nAChR C-loop of the principal binding face and at the adjacent binding interface in a clockwise direction. Component 4b which seems to correspond to this toxin blocks both neuronal and muscular subtypes: human alpha-7/CHRNA7 (IC(50)=125 nM), human alpha-3-beta-2 (CHRNA3-CHRNB2) (IC(50)=282 nM), human alpha-4-beta-2 (CHRNA4-CHRNB2) (IC(50)=697 nM), mouse adult muscular subtype alpha-1-beta-1-delta-epsilon (CHRNA1-CHRNB1-CHRND-CHRNE) (IC(50)=351 nM), and mouse fetal muscular subtype alpha-1-beta-1-gamma-delta (CHRNA1-CHRNB1-CHRNG-CHRND) (IC(50)=447 nM). It shows different dissociation rates towards the different subtypes, with a very slow rate towards alpha-7 subtype (almost irreversible), followed by the adult muscular subtype, the fetal muscular subtype, alpha-3-beta-2 and alpha-4-beta-2 (almost entirely reversible within a few minutes of washing). The protein is Alpha-conotoxin FrXXA 2 of Conus fergusoni (Ferguson's cone).